Consider the following 270-residue polypeptide: Indole-3-glycerol phosphate synthase (270 aa).

Belongs to the TrpC family.

The catalysed reaction is 1-(2-carboxyphenylamino)-1-deoxy-D-ribulose 5-phosphate + H(+) = (1S,2R)-1-C-(indol-3-yl)glycerol 3-phosphate + CO2 + H2O. The protein operates within amino-acid biosynthesis; L-tryptophan biosynthesis; L-tryptophan from chorismate: step 4/5. The sequence is that of Indole-3-glycerol phosphate synthase from Salinibacter ruber (strain DSM 13855 / M31).